A 331-amino-acid chain; its full sequence is Meiotic recombination protein W68 (331 aa).

Residues 1-120 (MDEFSENIER…LGILAASKGL (120 aa)) enclose the Topo IIA-type catalytic domain. The active-site O-(5'-phospho-DNA)-tyrosine intermediate is the Tyr-81. 2 residues coordinate Mg(2+): Glu-167 and Asp-221.

It belongs to the TOP6A family. Requires Mg(2+) as cofactor.

The protein resides in the nucleus. The catalysed reaction is ATP-dependent breakage, passage and rejoining of double-stranded DNA.. In terms of biological role, required for meiotic recombination. Together with mei-P22, mediates DNA cleavage that forms the double-strand breaks (DSB) that initiate meiotic recombination. This chain is Meiotic recombination protein W68, found in Drosophila melanogaster (Fruit fly).